A 98-amino-acid chain; its full sequence is MTERRRALSLAAVVDSINLACVVVSRDWLSLVPAFFYSPPPGGSFSGIKRESRRKRPSRNEIYGGGVLEQEVRMRRWSKTASPPVSLHHRPLGPARKP.

A signal peptide spans 1–19; sequence MTERRRALSLAAVVDSINL. The segment at 40–98 is disordered; it reads PPGGSFSGIKRESRRKRPSRNEIYGGGVLEQEVRMRRWSKTASPPVSLHHRPLGPARKP. Residues 87-98 show a composition bias toward basic residues; it reads LHHRPLGPARKP.

This is an uncharacterized protein from Homo sapiens (Human).